We begin with the raw amino-acid sequence, 149 residues long: MEKTFIMLKPDAVQRGLVGQIIARFEAKGCKLVGMKLMSVDQALAEQHYAEHKGKSFFEPTVQYIMSSPVVAMVWEGKNVVALARELMGATNPANANPGSIRGSFGMDISRNVIHGSDSVASAEREIALYFRPEELCDYRKAGEEWLSE.

Positions 9, 57, 85, 91, 102, and 112 each coordinate ATP. The active-site Pros-phosphohistidine intermediate is the His-115.

Belongs to the NDK family. As to quaternary structure, homotetramer. Mg(2+) serves as cofactor.

Its subcellular location is the cytoplasm. It catalyses the reaction a 2'-deoxyribonucleoside 5'-diphosphate + ATP = a 2'-deoxyribonucleoside 5'-triphosphate + ADP. The enzyme catalyses a ribonucleoside 5'-diphosphate + ATP = a ribonucleoside 5'-triphosphate + ADP. Major role in the synthesis of nucleoside triphosphates other than ATP. The ATP gamma phosphate is transferred to the NDP beta phosphate via a ping-pong mechanism, using a phosphorylated active-site intermediate. This Desulfitobacterium hafniense (strain DSM 10664 / DCB-2) protein is Nucleoside diphosphate kinase.